Consider the following 114-residue polypeptide: Photosystem II reaction center Psb28 protein (114 aa).

This sequence belongs to the Psb28 family. In terms of assembly, part of the photosystem II complex.

Its subcellular location is the plastid. It is found in the chloroplast thylakoid membrane. The chain is Photosystem II reaction center Psb28 protein from Gracilaria tenuistipitata var. liui (Red alga).